We begin with the raw amino-acid sequence, 85 residues long: Large ribosomal subunit protein bL27 (85 aa).

This sequence belongs to the bacterial ribosomal protein bL27 family.

The sequence is that of Large ribosomal subunit protein bL27 from Xylella fastidiosa (strain Temecula1 / ATCC 700964).